A 76-amino-acid polypeptide reads, in one-letter code: MIFECTSFETRHILNSYSCATQLSYNTYRITEKVNPIQAAVSKNNKPFVSNSDSAFFPIFSSFNFVAYTTLTFKKT.

This is an uncharacterized protein from Saccharomyces cerevisiae (strain ATCC 204508 / S288c) (Baker's yeast).